The chain runs to 93 residues: MLKHNSYFNGNVQSVGFERHGRRQTVGVIDTGEFHFSTDAPERMTVVAGELAIRVDGSTEWRAYPAGTSFEVAGKSGFDVRATQPAGYLCEFL.

Belongs to the nucleoside phosphorylase PpnP family.

It carries out the reaction a purine D-ribonucleoside + phosphate = a purine nucleobase + alpha-D-ribose 1-phosphate. The catalysed reaction is adenosine + phosphate = alpha-D-ribose 1-phosphate + adenine. It catalyses the reaction cytidine + phosphate = cytosine + alpha-D-ribose 1-phosphate. The enzyme catalyses guanosine + phosphate = alpha-D-ribose 1-phosphate + guanine. It carries out the reaction inosine + phosphate = alpha-D-ribose 1-phosphate + hypoxanthine. The catalysed reaction is thymidine + phosphate = 2-deoxy-alpha-D-ribose 1-phosphate + thymine. It catalyses the reaction uridine + phosphate = alpha-D-ribose 1-phosphate + uracil. The enzyme catalyses xanthosine + phosphate = alpha-D-ribose 1-phosphate + xanthine. Its function is as follows. Catalyzes the phosphorolysis of diverse nucleosides, yielding D-ribose 1-phosphate and the respective free bases. Can use uridine, adenosine, guanosine, cytidine, thymidine, inosine and xanthosine as substrates. Also catalyzes the reverse reactions. The sequence is that of Pyrimidine/purine nucleoside phosphorylase from Sorangium cellulosum (strain So ce56) (Polyangium cellulosum (strain So ce56)).